We begin with the raw amino-acid sequence, 397 residues long: Dual-specificity RNA methyltransferase RlmN (397 aa).

The active-site Proton acceptor is the Glu-130. Residues 138 to 377 enclose the Radical SAM core domain; that stretch reads VEDRGAVCIS…ASPIRTPRGR (240 aa). Cys-145 and Cys-383 are oxidised to a cystine. 3 residues coordinate [4Fe-4S] cluster: Cys-152, Cys-156, and Cys-159. Residues 209-210, Ser-241, 263-265, and Asn-340 each bind S-adenosyl-L-methionine; these read GE and SLH. Cys-383 acts as the S-methylcysteine intermediate in catalysis.

This sequence belongs to the radical SAM superfamily. RlmN family. The cofactor is [4Fe-4S] cluster.

The protein resides in the cytoplasm. It carries out the reaction adenosine(2503) in 23S rRNA + 2 reduced [2Fe-2S]-[ferredoxin] + 2 S-adenosyl-L-methionine = 2-methyladenosine(2503) in 23S rRNA + 5'-deoxyadenosine + L-methionine + 2 oxidized [2Fe-2S]-[ferredoxin] + S-adenosyl-L-homocysteine. The catalysed reaction is adenosine(37) in tRNA + 2 reduced [2Fe-2S]-[ferredoxin] + 2 S-adenosyl-L-methionine = 2-methyladenosine(37) in tRNA + 5'-deoxyadenosine + L-methionine + 2 oxidized [2Fe-2S]-[ferredoxin] + S-adenosyl-L-homocysteine. Its function is as follows. Specifically methylates position 2 of adenine 2503 in 23S rRNA and position 2 of adenine 37 in tRNAs. m2A2503 modification seems to play a crucial role in the proofreading step occurring at the peptidyl transferase center and thus would serve to optimize ribosomal fidelity. In Granulibacter bethesdensis (strain ATCC BAA-1260 / CGDNIH1), this protein is Dual-specificity RNA methyltransferase RlmN.